Here is a 533-residue protein sequence, read N- to C-terminus: Probable ribonuclease ZC3H12D (533 aa).

The 155-residue stretch at 92–246 (LRPIVIDGSN…PLGRRGPTLS (155 aa)) folds into the RNase NYN domain. The C3H1-type zinc finger occupies 251–282 (KKPRPPEPSWQHCPYGKKCTYGVKCRFYHPER). The necessary for interaction with ZC3H12A stretch occupies residues 262–368 (HCPYGKKCTY…ASGVVSQSRG (107 aa)). Residues 302 to 335 (LGGGAEEPRTPSARSRPTTARLLPQEPGEHDLPP) are disordered.

It belongs to the ZC3H12 family. Interacts with ZC3H12A. Requires Mg(2+) as cofactor. In terms of tissue distribution, expressed at low levels in bone marrow derived macrophages.

It is found in the cytoplasm. The protein resides in the P-body. In terms of biological role, may regulate cell growth likely by suppressing RB1 phosphorylation. May function as RNase and regulate the levels of target RNA species (Potential). In association with ZC3H12A enhances the degradation of interleukin IL-6 mRNA level in activated macrophages. Serve as a tumor suppressor in certain leukemia cells. Overexpression inhibits the G1 to S phase progression through suppression of RB1 phosphorylation. The sequence is that of Probable ribonuclease ZC3H12D from Mus musculus (Mouse).